A 224-amino-acid polypeptide reads, in one-letter code: 4-aminobenzoate synthase (224 aa).

Residues Glu-77, His-84, Glu-138, His-169, Asp-173, and His-176 each coordinate Fe(2+).

The protein belongs to the CADD family. As to quaternary structure, homodimer. Requires Fe(2+) as cofactor. Mn(2+) serves as cofactor.

In terms of biological role, involved in de novo para-aminobenzoate (PABA) biosynthesis. Acts as a self-sacrificing or 'suicide' enzyme that utilizes its own active site tyrosine residue(s) as the substrate for PABA synthesis. The side chain of the tyrosine residue is released from the protein backbone via cleavage of the C(alpha)-C(beta) bond, leaving a glycine in place of the original tyrosine residue. Reaction requires O(2) and a reduced dimetal cofactor. This chain is 4-aminobenzoate synthase, found in Chlamydia pneumoniae (Chlamydophila pneumoniae).